The primary structure comprises 352 residues: RNA demethylase ALKBH5 (352 aa).

A compositionally biased stretch (basic and acidic residues) spans 18 to 34 (RDKVFEYSNGEKRKYRE). The segment at 18-47 (RDKVFEYSNGEKRKYRESDDDESEYEERRD) is disordered. The active site involves Tyr-107. Residues Asn-161, Tyr-163, and His-172 each contribute to the 2-oxoglutarate site. 3 residues coordinate Fe cation: His-172, Asp-174, and His-234. A disulfide bridge links Cys-198 with Cys-235. Residues His-234 and Arg-245 each contribute to the 2-oxoglutarate site. Residues 260–352 (LDSNSLSPSI…PTRRVKMRRH (93 aa)) are disordered. Residues 272-285 (PKRRHILKAKRSHR) are compositionally biased toward basic residues. 2 stretches are compositionally biased toward basic and acidic residues: residues 286 to 306 (KADPDAAHRPRVLEMDKELQR) and 315 to 343 (RHDDGSSENSWRRADDREPAARYTHDHAP).

Belongs to the alkB family. Monomer. The cofactor is Fe(2+).

The protein resides in the nucleus speckle. The catalysed reaction is an N(6)-methyladenosine in mRNA + 2-oxoglutarate + O2 = an adenosine in mRNA + formaldehyde + succinate + CO2. Its function is as follows. Dioxygenase that specifically demethylates N(6)-methyladenosine (m6A) RNA, the most prevalent internal modification of messenger RNA (mRNA) in higher eukaryotes. Demethylates RNA by oxidative demethylation, which requires molecular oxygen, alpha-ketoglutarate and iron. Demethylation of m6A mRNA affects mRNA processing, translation and export. The protein is RNA demethylase ALKBH5 (alkbh5) of Danio rerio (Zebrafish).